Consider the following 355-residue polypeptide: MAKKPALSPQEFRSEALATALTTIERKHGQGAVMRLEDSAHVKIPAIPTGSIGLDLALGIGGIPKGRITEIYGPESSGKTTLALHIIAESQKLGGTAAFIDAEHALDVNYARRLGVNTPEMLISQPDFGEQALDIADLLVRSGAVDVVVIDSVAALIPQAELEGEMGETQVGGQARLMSHAMRKLTGTIHKSQTSVIFINQIRMKIGMTGYGSPETTTGGNALKFYASVRLDIRRIQTLKDKEETYGSRCRVKVVKNKVAPPFREALFDILYGTGVSREGELIDMGVEAGIVDKSGAWFAFGSERLGQGRDNVRAFLQEHTDIRDQIEGKLREHLGFAEYVPPPSPEVMEEEDGM.

73–80 (GPESSGKT) provides a ligand contact to ATP.

Belongs to the RecA family.

The protein localises to the cytoplasm. In terms of biological role, can catalyze the hydrolysis of ATP in the presence of single-stranded DNA, the ATP-dependent uptake of single-stranded DNA by duplex DNA, and the ATP-dependent hybridization of homologous single-stranded DNAs. It interacts with LexA causing its activation and leading to its autocatalytic cleavage. This chain is Protein RecA, found in Solidesulfovibrio magneticus (strain ATCC 700980 / DSM 13731 / RS-1) (Desulfovibrio magneticus).